Reading from the N-terminus, the 490-residue chain is Phosphoglucosamine mutase (490 aa).

Catalysis depends on S139, which acts as the Phosphoserine intermediate. 4 residues coordinate Mg(2+): S139, D279, D281, and D283. At S139 the chain carries Phosphoserine.

This sequence belongs to the phosphohexose mutase family. Mg(2+) serves as cofactor. In terms of processing, activated by phosphorylation.

It carries out the reaction alpha-D-glucosamine 1-phosphate = D-glucosamine 6-phosphate. Its function is as follows. Catalyzes the conversion of glucosamine-6-phosphate to glucosamine-1-phosphate. This is Phosphoglucosamine mutase from Nostoc punctiforme (strain ATCC 29133 / PCC 73102).